Consider the following 146-residue polypeptide: Ribonuclease H (146 aa).

Positions Met1–Asp138 constitute an RNase H type-1 domain. Mg(2+) contacts are provided by Asp6, Glu44, Asp66, and Asp130.

The protein belongs to the RNase H family. As to quaternary structure, monomer. The cofactor is Mg(2+).

It localises to the cytoplasm. It carries out the reaction Endonucleolytic cleavage to 5'-phosphomonoester.. Its function is as follows. Endonuclease that specifically degrades the RNA of RNA-DNA hybrids. The polypeptide is Ribonuclease H (Alkalilimnicola ehrlichii (strain ATCC BAA-1101 / DSM 17681 / MLHE-1)).